The chain runs to 475 residues: Ribulose bisphosphate carboxylase large chain (475 aa).

The propeptide occupies 1–2; sequence MV. At Pro-3 the chain carries N-acetylproline. Position 14 is an N6,N6,N6-trimethyllysine (Lys-14). Substrate is bound by residues Asn-123 and Thr-173. Residue Lys-175 is the Proton acceptor of the active site. Lys-177 contacts substrate. The Mg(2+) site is built by Lys-201, Asp-203, and Glu-204. Lys-201 is subject to N6-carboxylysine. Catalysis depends on His-294, which acts as the Proton acceptor. The substrate site is built by Arg-295, His-327, and Ser-379.

Belongs to the RuBisCO large chain family. Type I subfamily. Heterohexadecamer of 8 large chains and 8 small chains. It depends on Mg(2+) as a cofactor.

The protein localises to the plastid. It is found in the chloroplast. The enzyme catalyses 2 (2R)-3-phosphoglycerate + 2 H(+) = D-ribulose 1,5-bisphosphate + CO2 + H2O. It carries out the reaction D-ribulose 1,5-bisphosphate + O2 = 2-phosphoglycolate + (2R)-3-phosphoglycerate + 2 H(+). Its function is as follows. RuBisCO catalyzes two reactions: the carboxylation of D-ribulose 1,5-bisphosphate, the primary event in carbon dioxide fixation, as well as the oxidative fragmentation of the pentose substrate in the photorespiration process. Both reactions occur simultaneously and in competition at the same active site. In Dunaliella tertiolecta (Green alga), this protein is Ribulose bisphosphate carboxylase large chain.